Consider the following 301-residue polypeptide: Putative S-adenosyl-L-methionine-dependent methyltransferase Mflv_5024 (301 aa).

Residues Asp-129 and 158-159 (DL) each bind S-adenosyl-L-methionine.

Belongs to the UPF0677 family.

Its function is as follows. Exhibits S-adenosyl-L-methionine-dependent methyltransferase activity. The chain is Putative S-adenosyl-L-methionine-dependent methyltransferase Mflv_5024 from Mycolicibacterium gilvum (strain PYR-GCK) (Mycobacterium gilvum (strain PYR-GCK)).